Here is a 261-residue protein sequence, read N- to C-terminus: tRNA pseudouridine synthase A (261 aa).

The active-site Nucleophile is the D51. Position 109 (Y109) interacts with substrate.

Belongs to the tRNA pseudouridine synthase TruA family. As to quaternary structure, homodimer.

The enzyme catalyses uridine(38/39/40) in tRNA = pseudouridine(38/39/40) in tRNA. In terms of biological role, formation of pseudouridine at positions 38, 39 and 40 in the anticodon stem and loop of transfer RNAs. This chain is tRNA pseudouridine synthase A, found in Shewanella denitrificans (strain OS217 / ATCC BAA-1090 / DSM 15013).